The sequence spans 321 residues: UDP-N-acetylenolpyruvoylglucosamine reductase (321 aa).

Residues 39-205 (RTGGLAELFY…TAALLEGEPG (167 aa)) enclose the FAD-binding PCMH-type domain. The active site involves Arg185. Ser234 functions as the Proton donor in the catalytic mechanism. Glu304 is an active-site residue.

Belongs to the MurB family. The cofactor is FAD.

The protein localises to the cytoplasm. The catalysed reaction is UDP-N-acetyl-alpha-D-muramate + NADP(+) = UDP-N-acetyl-3-O-(1-carboxyvinyl)-alpha-D-glucosamine + NADPH + H(+). Its pathway is cell wall biogenesis; peptidoglycan biosynthesis. In terms of biological role, cell wall formation. The protein is UDP-N-acetylenolpyruvoylglucosamine reductase of Bartonella quintana (strain Toulouse) (Rochalimaea quintana).